The primary structure comprises 76 residues: Short coiled-coil protein B (76 aa).

Positions glutamate 6–leucine 52 form a coiled coil.

This sequence belongs to the SCOC family.

It is found in the golgi apparatus membrane. It localises to the golgi apparatus. Its subcellular location is the trans-Golgi network. The protein resides in the cytoplasm. The protein localises to the cytosol. Its function is as follows. Positive regulator of amino acid starvation-induced autophagy. The sequence is that of Short coiled-coil protein B (scocb) from Danio rerio (Zebrafish).